The primary structure comprises 185 residues: Ribosome-recycling factor (185 aa).

This sequence belongs to the RRF family.

It is found in the cytoplasm. In terms of biological role, responsible for the release of ribosomes from messenger RNA at the termination of protein biosynthesis. May increase the efficiency of translation by recycling ribosomes from one round of translation to another. The protein is Ribosome-recycling factor of Kineococcus radiotolerans (strain ATCC BAA-149 / DSM 14245 / SRS30216).